The following is a 762-amino-acid chain: ABC-type oligopeptide transporter ABCB9 (762 aa).

8 helical membrane passes run 7-27 (VVVT…IYAF), 47-67 (VLDL…ATIG), 84-104 (LVIT…LLLF), 116-136 (FWAL…LWGL), 181-201 (VAFL…ETFL), 221-241 (FTTA…AAGI), 315-335 (VFMF…FPII), and 412-432 (SGLT…HLVI). In terms of domain architecture, ABC transmembrane type-1 spans 184-467 (LVAASFFLIV…VGSVYSGLMQ (284 aa)). The ABC transporter domain maps to 500-736 (VDFENVTFTY…GGLYAKLVQR (237 aa)). 535–542 (GPSGSGKS) contributes to the ATP binding site.

It belongs to the ABC transporter superfamily. ABCB family. MHC peptide exporter (TC 3.A.1.209) subfamily. Homodimer. Interacts (via TMD0 region) with LAMP1; this interaction strongly stabilizes ABCB9 and protects ABCB9 against lysosomal degradation. Interacts (via TMD0 region) with LAMP2 (isoform LAMP-2B). Interacts (via TMD0) with YIF1B; this interaction allows (but is not essential) the ER-to-Golgi trafficking and strongly depends on a salt bridge within TMD0. As to expression, highly expressed in testis, particularly in the Sertoli cells of the seminiferous tubules, and at moderate levels in brain and spinal cord.

It localises to the lysosome membrane. It catalyses the reaction a [oligopeptide](in) + ATP + H2O = a [oligopeptide](out) + ADP + phosphate + H(+). Functionally, ATP-dependent low-affinity peptide transporter which translocates a broad spectrum of peptides from the cytosol to the lysosomal lumen for degradation. Displays a broad peptide length specificity from 6-mer up to at least 59-mer peptides with an optimum of 23-mers. Binds and transports smaller and larger peptides with the same affinity. Favors positively charged, aromatic or hydrophobic residues in the N- and C-terminal positions whereas negatively charged residues as well as asparagine and methionine are not favored. The sequence is that of ABC-type oligopeptide transporter ABCB9 from Mus musculus (Mouse).